Here is a 1124-residue protein sequence, read N- to C-terminus: Tyrosine-protein kinase JAK3 (1124 aa).

Residues 1–223 form an interaction with cytokine/interferon/growth hormone receptors region; that stretch reads MAPPSEETPL…RRTVRRALRR (223 aa). Phosphoserine is present on S17. The FERM domain maps to 24-356; sequence GALHVLLPAR…GYFRLTTDSQ (333 aa). The region spanning 375-475 is the SH2; atypical domain; sequence QCHGPITLDF…GVAVTLTSCC (101 aa). The Protein kinase 1 domain maps to 521–781; that stretch reads LEWHENLGHG…AVIRDLNSLI (261 aa). Position 785 is a phosphotyrosine; by autocatalysis (Y785). Positions 822 to 1111 constitute a Protein kinase 2 domain; it reads LKYISQLGKG…SRGCETHAFT (290 aa). ATP contacts are provided by residues 828–836 and K855; that span reads LGKGNFGSV. A phosphotyrosine mark is found at Y904 and Y939. Residue D949 is the Proton acceptor of the active site. Phosphotyrosine; by autocatalysis is present on residues Y980 and Y981.

The protein belongs to the protein kinase superfamily. Tyr protein kinase family. JAK subfamily. As to quaternary structure, interacts with STAM2 and MYO18A. Interacts with SHB. Interacts with CD69. Tyrosine phosphorylated in response to IL-2 and IL-4. Dephosphorylation of Tyr-980 and Tyr-981 by PTPN2 negatively regulates cytokine-mediated signaling. In terms of tissue distribution, in NK cells and an NK-like cell line but not in resting T-cells or in other tissues. The S-form is more commonly seen in hematopoietic lines, whereas the B-form is detected in cells both of hematopoietic and epithelial origins.

The protein resides in the endomembrane system. The protein localises to the cytoplasm. It carries out the reaction L-tyrosyl-[protein] + ATP = O-phospho-L-tyrosyl-[protein] + ADP + H(+). Non-receptor tyrosine kinase involved in various processes such as cell growth, development, or differentiation. Mediates essential signaling events in both innate and adaptive immunity and plays a crucial role in hematopoiesis during T-cells development. In the cytoplasm, plays a pivotal role in signal transduction via its association with type I receptors sharing the common subunit gamma such as IL2R, IL4R, IL7R, IL9R, IL15R and IL21R. Following ligand binding to cell surface receptors, phosphorylates specific tyrosine residues on the cytoplasmic tails of the receptor, creating docking sites for STATs proteins. Subsequently, phosphorylates the STATs proteins once they are recruited to the receptor. Phosphorylated STATs then form homodimer or heterodimers and translocate to the nucleus to activate gene transcription. For example, upon IL2R activation by IL2, JAK1 and JAK3 molecules bind to IL2R beta (IL2RB) and gamma chain (IL2RG) subunits inducing the tyrosine phosphorylation of both receptor subunits on their cytoplasmic domain. Then, STAT5A and STAT5B are recruited, phosphorylated and activated by JAK1 and JAK3. Once activated, dimerized STAT5 translocates to the nucleus and promotes the transcription of specific target genes in a cytokine-specific fashion. This chain is Tyrosine-protein kinase JAK3, found in Homo sapiens (Human).